A 423-amino-acid polypeptide reads, in one-letter code: CinA-like protein (423 aa).

This sequence belongs to the CinA family.

This chain is CinA-like protein, found in Synechococcus sp. (strain CC9311).